The chain runs to 207 residues: 3-demethoxyubiquinol 3-hydroxylase (207 aa).

Residues E56, E86, H89, E138, E170, and H173 each coordinate Fe cation.

The protein belongs to the COQ7 family. Requires Fe cation as cofactor.

It is found in the cell membrane. It catalyses the reaction a 5-methoxy-2-methyl-3-(all-trans-polyprenyl)benzene-1,4-diol + AH2 + O2 = a 3-demethylubiquinol + A + H2O. The protein operates within cofactor biosynthesis; ubiquinone biosynthesis. Its function is as follows. Catalyzes the hydroxylation of 2-nonaprenyl-3-methyl-6-methoxy-1,4-benzoquinol during ubiquinone biosynthesis. This Cupriavidus pinatubonensis (strain JMP 134 / LMG 1197) (Cupriavidus necator (strain JMP 134)) protein is 3-demethoxyubiquinol 3-hydroxylase.